We begin with the raw amino-acid sequence, 485 residues long: Pentatricopeptide repeat-containing protein At1g62720 (485 aa).

12 PPR repeats span residues 68 to 102, 103 to 137, 138 to 172, 173 to 207, 208 to 242, 243 to 277, 278 to 312, 313 to 347, 348 to 378, 380 to 414, 415 to 449, and 450 to 484; these read SIVD…GIGH, DLYS…GYEP, DVVT…GFRP, DVVI…GVRA, DAVT…DIVP, NVIT…CVDP, DVFT…GCLP, DVVT…GLVG, DTIT…MDSR, NIRT…EIEL, DITT…GLKP, and DVVS…GLLP.

Belongs to the PPR family. P subfamily.

This Arabidopsis thaliana (Mouse-ear cress) protein is Pentatricopeptide repeat-containing protein At1g62720.